Consider the following 93-residue polypeptide: Parbolysin P1 (93 aa).

3 disulfide bridges follow: C16/C37, C22/C33, and C47/C60.

The protein belongs to the worm cytolysin family. In terms of tissue distribution, localized within the skin and proboscis and are most readily isolated from body mucus secretions.

The protein localises to the secreted. Its function is as follows. Cytolysin that shows hemolytic activity (on bovine erythrocytes, HC(50)=5.75 mg/ml). This hemolytic activity is completely inhibited by small unilamelar vesicles composed of PC/PG, PC/PI and PC/PS in 1:1 molar ratios (with at least 100 mg/ml concentration). The recombinant protein does not show hemolytic activity, suggesting that it is not properly folded or that it requires a free N-terminal end for its activity. The polypeptide is Parbolysin P1 (Parborlasia corrugatus (Antarctic nemertean worm)).